A 490-amino-acid polypeptide reads, in one-letter code: Acetyl-coenzyme A carboxylase carboxyl transferase subunit beta, chloroplastic (490 aa).

Residues 184 to 203 form a disordered region; that stretch reads LNSSENEGSSRRTRTKGSDL. The region spanning 221–490 is the CoA carboxyltransferase N-terminal domain; it reads LWVQCENCYG…PLNQKSSKIK (270 aa). Zn(2+) is bound by residues C225, C228, C244, and C247. The segment at 225–247 adopts a C4-type zinc-finger fold; sequence CENCYGLNYKKFLKSKMNICEQC.

The protein belongs to the AccD/PCCB family. As to quaternary structure, acetyl-CoA carboxylase is a heterohexamer composed of biotin carboxyl carrier protein, biotin carboxylase and 2 subunits each of ACCase subunit alpha and ACCase plastid-coded subunit beta (accD). It depends on Zn(2+) as a cofactor.

The protein localises to the plastid. It localises to the chloroplast stroma. It carries out the reaction N(6)-carboxybiotinyl-L-lysyl-[protein] + acetyl-CoA = N(6)-biotinyl-L-lysyl-[protein] + malonyl-CoA. It functions in the pathway lipid metabolism; malonyl-CoA biosynthesis; malonyl-CoA from acetyl-CoA: step 1/1. Functionally, component of the acetyl coenzyme A carboxylase (ACC) complex. Biotin carboxylase (BC) catalyzes the carboxylation of biotin on its carrier protein (BCCP) and then the CO(2) group is transferred by the transcarboxylase to acetyl-CoA to form malonyl-CoA. In Solanum bulbocastanum (Wild potato), this protein is Acetyl-coenzyme A carboxylase carboxyl transferase subunit beta, chloroplastic.